The chain runs to 154 residues: OCIA domain-containing protein 2 (154 aa).

A disordered region spans residues 1-22 (MASASARGNQDKDAHFPPPSKQ). The OCIA domain occupies 1-120 (MASASARGNQ…HFFEDQLRGA (120 aa)). Lys-41 bears the N6-acetyllysine mark.

As to quaternary structure, interacts (via OCIA domain) with OCIAD1/ASRIJ and STAT3.

The protein localises to the endosome. The protein resides in the mitochondrion. Its subcellular location is the mitochondrion inner membrane. Functionally, has an essential role in the assembly of mitochondrial respiratory chain complex III. Is also required for STAT3 activation and plays a role in cell migration. The chain is OCIA domain-containing protein 2 (OCIAD2) from Homo sapiens (Human).